Reading from the N-terminus, the 343-residue chain is Selenide, water dikinase (343 aa).

Sec13 is a catalytic residue. Sec13 is a non-standard amino acid (selenocysteine). ATP-binding positions include Lys16 and 44-46; that span reads TAD. Asp47 is a Mg(2+) binding site. ATP-binding positions include Asp64, Asp87, and 135-137; that span reads GHT. Residue Asp87 coordinates Mg(2+). Position 223 (Asp223) interacts with Mg(2+).

It belongs to the selenophosphate synthase 1 family. Class I subfamily. In terms of assembly, homodimer. Mg(2+) is required as a cofactor.

It catalyses the reaction hydrogenselenide + ATP + H2O = selenophosphate + AMP + phosphate + 2 H(+). Its function is as follows. Synthesizes selenophosphate from selenide and ATP. This is Selenide, water dikinase from Geobacter metallireducens (strain ATCC 53774 / DSM 7210 / GS-15).